The sequence spans 815 residues: MYKSVSETRHPLQSEEQEVGIDPLFSYSNKTRGDLSQNGRGSNSTLDTEGTFNSYMKEWEELFVNNNYLATVRQKGINGQLRSSRFRSICWKLFLCVLPQDKSQWISKIKELRAWYSSIKEIHITNPRKAAGQQDLMINNPLSQDEGSLWNKFFQDKELRSMIEQDVKRTFPEMQFFQQENVRKILTDVLFCYARENEQLLYKQGMHELLAPIIFTLHCDHQAFLHASESAQPSEEMKTLLNPEYLEHDAYAMFSQLMETAEPWFSTFEHDGQKGKETLMAPIPFARPQDLGPTVAIVTKVNQIQDHLLKKHDIELYMHLNRLEIAPQIYGLRWVRLLFGREFPLQDLLVVWDALFADSLNLSLVDYVFTAMLLYIRDALISSNYQTCLGLLMHYPIIGDIHSLILKALFLRDPKRNPRPATYQFHPNLDYYKARGADLMNKSRTNARGAPLNIHKVSNSLINFGRKLISPASAPGSMGGPVPGNNSSSSFSAAIPTRTSTEAPRHHLLQQQQQQQHQQQQQQQPQQQQQQHQQQQQQQRLMKSESMPVQLNKGQSSKTISSSPSIESLPGGREFTGSPPPSATKKDSFFSNIARSRSHSKTMGRKESEEELEAQISFLQGQLNDLDAMCKYCAKVMDMHLVNIQDVVLQENLEKEDQILVSLAGLKQIKDILKGSLRFNQSQLEAGENEQITIADDHYCSSGQDQGSQVPRAAKQASSEMPGCTGGTTPDDFILVSKEDEGHRARGAFSGQAQPLLTLRSTSGKSRAPACSPLLFSDPLMGPASASASSSNPSSSPDDDSSKESGFTIVSPLDI.

Ser-44 bears the Phosphoserine mark. Residues Met-56–Val-64 are required for interaction with retromer; involved in interaction with ATG8 family proteins. The LIR 1 signature appears at Lys-57 to Leu-62. A Rab-GAP TBC domain is found at Leu-81 to Ser-359. Asymmetric dimethylarginine; alternate is present on Arg-448. At Arg-448 the chain carries Omega-N-methylarginine; alternate. At Ser-460 the chain carries Phosphoserine. The disordered stretch occupies residues Pro-475–Ser-591. 2 stretches are compositionally biased toward low complexity: residues Pro-483–Ser-492 and Gln-510–Gln-539. Ser-546, Ser-563, Ser-565, Ser-568, Ser-578, and Ser-608 each carry phosphoserine. A compositionally biased stretch (low complexity) spans Ser-556–Ser-568. 2 disordered regions span residues Ser-702–Phe-733 and Gln-754–Ile-815. Positions Gln-754–Lys-765 are enriched in polar residues. Positions Pro-783 to Ser-796 are enriched in low complexity. The short motif at Ser-805–Ile-809 is the LIR 2 element. The segment at Gly-806–Ser-811 is required for interaction with ATG8 family proteins. Phosphoserine is present on Ser-811.

Interacts with MAP1LC3A, MAP1LC3B, MAP1LC3C, GABARAP, GABARAPL1, GABARAPL2. Interacts with VPS29 and VPS35; indicative for an association with retromer CSC subcomplex. MAP1LC3A and VPS29 compete for binding to TBC1D5. Interacts with AP2M1; indicative for an association with the AP2 complex. Interacts with ULK1 and ATG13 (phosphorylated); indicative for an association with the activated ULK1-ATG13-FIP200 complex. Interacts with ATG9A; the interactions seems to be restricted to the AP2-clathrin-associated fraction of ATG9A.

It localises to the endosome membrane. The protein resides in the cytoplasmic vesicle. It is found in the autophagosome. May act as a GTPase-activating protein for Rab family protein(s). May act as a GAP for RAB7A. Can displace RAB7A and retromer CSC subcomplex from the endosomal membrane to the cytosol; at least retromer displacement seems to require its catalytic activity. Required for retrograde transport of cargo proteins from endosomes to the trans-Golgi network (TGN); the function seems to require its catalytic activity. Involved in regulation of autophagy. May act as a molecular switch between endosomal and autophagosomal transport and is involved in reprogramming vesicle trafficking upon autophagy induction. Involved in the trafficking of ATG9A upon activation of autophagy. May regulate the recruitment of ATG9A-AP2-containing vesicles to autophagic membranes. The chain is TBC1 domain family member 5 (Tbc1d5) from Mus musculus (Mouse).